A 435-amino-acid polypeptide reads, in one-letter code: Ribulose bisphosphate carboxylase/oxygenase activase 2, chloroplastic (435 aa).

A chloroplast-targeting transit peptide spans M1 to V56. G165–S172 contacts ATP.

This sequence belongs to the RuBisCO activase family.

Its subcellular location is the plastid. It localises to the chloroplast stroma. Functionally, activation of RuBisCO (ribulose-1,5-bisphosphate carboxylase/oxygenase; EC 4.1.1.39) involves the ATP-dependent carboxylation of the epsilon-amino group of lysine leading to a carbamate structure. This is Ribulose bisphosphate carboxylase/oxygenase activase 2, chloroplastic (RCA2) from Larrea tridentata (Creosote bush).